The sequence spans 326 residues: Mitochondrial glycine transporter (326 aa).

Solcar repeat units follow at residues 22–106, 135–216, and 228–312; these read SKTT…LRTS, SANL…LKRY, and SSSS…LILR. Helical transmembrane passes span 28 to 53, 81 to 107, 138 to 163, 191 to 214, 232 to 258, and 287 to 305; these read FGAG…TRVQ, GTLP…RTSL, LATG…VRYE, GFGA…EQLK, INFV…KTRL, and GLGL…AWTV.

The protein belongs to the mitochondrial carrier (TC 2.A.29) family. SLC25A38 subfamily.

The protein localises to the mitochondrion inner membrane. It carries out the reaction glycine(in) = glycine(out). Its function is as follows. Mitochondrial glycine transporter that imports glycine into the mitochondrial matrix. Plays an important role in providing glycine for the first enzymatic step in heme biosynthesis, the condensation of glycine with succinyl-CoA to produce 5-aminolevulinate (ALA) in the mitochondrial matrix. The polypeptide is Mitochondrial glycine transporter (Emericella nidulans (strain FGSC A4 / ATCC 38163 / CBS 112.46 / NRRL 194 / M139) (Aspergillus nidulans)).